A 151-amino-acid polypeptide reads, in one-letter code: Deoxyuridine 5'-triphosphate nucleotidohydrolase (151 aa).

Substrate is bound by residues 70–72 (RSG), asparagine 83, 87–89 (LID), and methionine 97.

The protein belongs to the dUTPase family. The cofactor is Mg(2+).

The enzyme catalyses dUTP + H2O = dUMP + diphosphate + H(+). The protein operates within pyrimidine metabolism; dUMP biosynthesis; dUMP from dCTP (dUTP route): step 2/2. Functionally, this enzyme is involved in nucleotide metabolism: it produces dUMP, the immediate precursor of thymidine nucleotides and it decreases the intracellular concentration of dUTP so that uracil cannot be incorporated into DNA. This is Deoxyuridine 5'-triphosphate nucleotidohydrolase from Pseudomonas fluorescens (strain ATCC BAA-477 / NRRL B-23932 / Pf-5).